We begin with the raw amino-acid sequence, 384 residues long: Chaperone protein DnaJ (384 aa).

One can recognise a J domain in the interval 4-68; it reads DFYEILGVSR…EKRQMYDQMG (65 aa). Disordered regions lie at residues 29–60 and 73–131; these read REYH…DEEK and EQAE…GQDL. Positions 42–60 are enriched in basic and acidic residues; the sequence is EEKFKQAKKAKEVLTDEEK. The segment covering 80–101 has biased composition (gly residues); it reads GAGGGGGRGGMGGDPFGGGAGG. Low complexity predominate over residues 102 to 111; it reads FDMQDIFDQF. Residues 112–121 are compositionally biased toward gly residues; it reads FGGGGRGGRG. Residues 145–227 form a CR-type zinc finger; the sequence is GATKQLNVTR…CRGNGVVQND (83 aa). Zn(2+)-binding residues include Cys158, Cys161, Cys175, and Cys178. CXXCXGXG motif repeat units follow at residues 158–165, 175–182, 201–208, and 215–222; these read CDDCDGAG, CPECNGQG, CRRCDGEG, and CSTCRGNG. The interval 160 to 191 is disordered; sequence DCDGAGHPPGADSETCPECNGQGQTTQVQQTP. Residues 180–190 are compositionally biased toward low complexity; sequence GQGQTTQVQQT. 4 residues coordinate Zn(2+): Cys201, Cys204, Cys215, and Cys218.

It belongs to the DnaJ family. As to quaternary structure, homodimer. Zn(2+) serves as cofactor.

Its subcellular location is the cytoplasm. In terms of biological role, participates actively in the response to hyperosmotic and heat shock by preventing the aggregation of stress-denatured proteins and by disaggregating proteins, also in an autonomous, DnaK-independent fashion. Unfolded proteins bind initially to DnaJ; upon interaction with the DnaJ-bound protein, DnaK hydrolyzes its bound ATP, resulting in the formation of a stable complex. GrpE releases ADP from DnaK; ATP binding to DnaK triggers the release of the substrate protein, thus completing the reaction cycle. Several rounds of ATP-dependent interactions between DnaJ, DnaK and GrpE are required for fully efficient folding. Also involved, together with DnaK and GrpE, in the DNA replication of plasmids through activation of initiation proteins. The sequence is that of Chaperone protein DnaJ from Haloarcula marismortui (strain ATCC 43049 / DSM 3752 / JCM 8966 / VKM B-1809) (Halobacterium marismortui).